The chain runs to 247 residues: Coproheme decarboxylase (247 aa).

Residues arginine 129, 143–147, histidine 170, glutamine 183, and serine 221 each bind Fe-coproporphyrin III; that span reads YPMDK. The active site involves tyrosine 143.

The protein belongs to the ChdC family. Type 1 subfamily. Requires Fe-coproporphyrin III as cofactor.

It carries out the reaction Fe-coproporphyrin III + 2 H2O2 + 2 H(+) = heme b + 2 CO2 + 4 H2O. It catalyses the reaction Fe-coproporphyrin III + H2O2 + H(+) = harderoheme III + CO2 + 2 H2O. The enzyme catalyses harderoheme III + H2O2 + H(+) = heme b + CO2 + 2 H2O. It functions in the pathway porphyrin-containing compound metabolism; protoheme biosynthesis. Functionally, involved in coproporphyrin-dependent heme b biosynthesis. Catalyzes the decarboxylation of Fe-coproporphyrin III (coproheme) to heme b (protoheme IX), the last step of the pathway. The reaction occurs in a stepwise manner with a three-propionate intermediate. The sequence is that of Coproheme decarboxylase from Bacillus cereus (strain AH820).